The following is a 156-amino-acid chain: MNFGATFWGPMISFALFVWFTMKFVWPPIQQALADRQKQIADGLAAGERGKEELDKAQAEVEAMLRDAREQASQIINQANKRQAEMIEEARAEARSEADRILASAREEIDQEIQRAREDLRKQVSTIAVQASSQILKREVDAKAHKDLIDELATQI.

A helical transmembrane segment spans residues 4-26 (GATFWGPMISFALFVWFTMKFVW).

The protein belongs to the ATPase B chain family. As to quaternary structure, F-type ATPases have 2 components, F(1) - the catalytic core - and F(0) - the membrane proton channel. F(1) has five subunits: alpha(3), beta(3), gamma(1), delta(1), epsilon(1). F(0) has three main subunits: a(1), b(2) and c(10-14). The alpha and beta chains form an alternating ring which encloses part of the gamma chain. F(1) is attached to F(0) by a central stalk formed by the gamma and epsilon chains, while a peripheral stalk is formed by the delta and b chains.

The protein localises to the cell inner membrane. Its function is as follows. F(1)F(0) ATP synthase produces ATP from ADP in the presence of a proton or sodium gradient. F-type ATPases consist of two structural domains, F(1) containing the extramembraneous catalytic core and F(0) containing the membrane proton channel, linked together by a central stalk and a peripheral stalk. During catalysis, ATP synthesis in the catalytic domain of F(1) is coupled via a rotary mechanism of the central stalk subunits to proton translocation. Functionally, component of the F(0) channel, it forms part of the peripheral stalk, linking F(1) to F(0). This Halorhodospira halophila (strain DSM 244 / SL1) (Ectothiorhodospira halophila (strain DSM 244 / SL1)) protein is ATP synthase subunit b.